The sequence spans 801 residues: Transferrin receptor protein 2 (801 aa).

At 1 to 83 (MERLWGLFQR…WAAAGRRAAP (83 aa)) the chain is on the cytoplasmic side. Positions 16–45 (PRSSQTVYQRVEGPRKGHLEEEEEDGEEGA) are disordered. The Endocytosis signal motif lies at 23–26 (YQRV). Positions 35-45 (EEEEEDGEEGA) are enriched in acidic residues. Residues 84–104 (YLVLTALLIFTGAFLLGYVAF) traverse the membrane as a helical; Signal-anchor for type II membrane protein segment. The Extracellular portion of the chain corresponds to 105-801 (RGSCQACGDS…GDVWNIDNNF (697 aa)). N-linked (GlcNAc...) asparagine glycans are attached at residues asparagine 240, asparagine 339, asparagine 540, and asparagine 754.

This sequence belongs to the peptidase M28 family. M28B subfamily. As to quaternary structure, homodimer. Predominantly expressed in liver. While the alpha form is also expressed in spleen, lung, muscle, prostate and peripheral blood mononuclear cells, the beta form is expressed in all tissues tested, albeit weakly.

It localises to the cell membrane. Its subcellular location is the cytoplasm. Mediates cellular uptake of transferrin-bound iron in a non-iron dependent manner. May be involved in iron metabolism, hepatocyte function and erythrocyte differentiation. The polypeptide is Transferrin receptor protein 2 (TFR2) (Homo sapiens (Human)).